We begin with the raw amino-acid sequence, 380 residues long: Gap junction gamma-1 protein (380 aa).

The Cytoplasmic portion of the chain corresponds to Met1–Lys22. The chain crosses the membrane as a helical span at residues Ile23–Tyr45. Topologically, residues Asp46–Arg75 are extracellular. A helical transmembrane segment spans residues Phe76–Ala95. The Cytoplasmic segment spans residues Met96 to Lys171. Residues Val172–Leu194 form a helical membrane-spanning segment. At Tyr195–Leu228 the chain is on the extracellular side. The helical transmembrane segment at Leu229–Leu251 threads the bilayer. The Cytoplasmic portion of the chain corresponds to Ser252–Ala380. The disordered stretch occupies residues Ala337 to Ala380. A compositionally biased stretch (low complexity) spans Glu342 to Ser353. The segment covering Asn354–Lys369 has biased composition (polar residues). The segment covering Gln370–Ala380 has biased composition (basic and acidic residues).

The protein belongs to the connexin family. Gamma-type subfamily. In terms of assembly, a connexon is composed of a hexamer of connexins.

Its subcellular location is the cell membrane. It localises to the cell junction. The protein localises to the gap junction. Functionally, one gap junction consists of a cluster of closely packed pairs of transmembrane channels, the connexons, through which materials of low MW diffuse from one cell to a neighboring cell. Participates in a developmental pathway for formation of the notochord and tail. The polypeptide is Gap junction gamma-1 protein (gjc1) (Danio rerio (Zebrafish)).